The primary structure comprises 400 residues: Bifunctional enzyme IspD/IspF (400 aa).

Residues 1 to 244 are 2-C-methyl-D-erythritol 4-phosphate cytidylyltransferase; the sequence is MSHRVLGTER…LLKERDKMDI (244 aa). The 2-C-methyl-D-erythritol 2,4-cyclodiphosphate synthase stretch occupies residues 245-400; the sequence is RTGNGYDVHR…ALATVTLVRT (156 aa). A divalent metal cation contacts are provided by Asp-251 and His-253. Residues 251–253 and 277–278 contribute to the 4-CDP-2-C-methyl-D-erythritol 2-phosphate site; these read DVH and HS. Residue His-285 coordinates a divalent metal cation. Residues 299–301, 375–378, Phe-382, and Arg-385 each bind 4-CDP-2-C-methyl-D-erythritol 2-phosphate; these read DIG and TTSE.

It in the N-terminal section; belongs to the IspD/TarI cytidylyltransferase family. IspD subfamily. In the C-terminal section; belongs to the IspF family. Requires a divalent metal cation as cofactor.

It catalyses the reaction 2-C-methyl-D-erythritol 4-phosphate + CTP + H(+) = 4-CDP-2-C-methyl-D-erythritol + diphosphate. The enzyme catalyses 4-CDP-2-C-methyl-D-erythritol 2-phosphate = 2-C-methyl-D-erythritol 2,4-cyclic diphosphate + CMP. It functions in the pathway isoprenoid biosynthesis; isopentenyl diphosphate biosynthesis via DXP pathway; isopentenyl diphosphate from 1-deoxy-D-xylulose 5-phosphate: step 2/6. Its pathway is isoprenoid biosynthesis; isopentenyl diphosphate biosynthesis via DXP pathway; isopentenyl diphosphate from 1-deoxy-D-xylulose 5-phosphate: step 4/6. In terms of biological role, bifunctional enzyme that catalyzes the formation of 4-diphosphocytidyl-2-C-methyl-D-erythritol from CTP and 2-C-methyl-D-erythritol 4-phosphate (MEP) (IspD), and catalyzes the conversion of 4-diphosphocytidyl-2-C-methyl-D-erythritol 2-phosphate (CDP-ME2P) to 2-C-methyl-D-erythritol 2,4-cyclodiphosphate (ME-CPP) with a corresponding release of cytidine 5-monophosphate (CMP) (IspF). In Dinoroseobacter shibae (strain DSM 16493 / NCIMB 14021 / DFL 12), this protein is Bifunctional enzyme IspD/IspF.